A 206-amino-acid chain; its full sequence is Tetrathionate response regulatory protein TtrR (206 aa).

Positions 3–117 constitute a Response regulatory domain; the sequence is TIHLLDDDTA…PLQAALERAL (115 aa). D52 is modified (4-aspartylphosphate). Positions 134-194 constitute an HTH luxR-type domain; sequence QQLTPKEREL…ELIRRFEKMA (61 aa). Positions 153 to 172 form a DNA-binding region, H-T-H motif; it reads NREIAEAMNIAVRTVEVHRA.

Phosphorylated by TtrS.

The protein localises to the cytoplasm. Member of the two-component regulatory system TtrR/TtrS, which is required for synthesis of tetrathionate reductase. Positively regulates transcription of the ttrBCA operon. During mice infection, the ability to use tetrathionate as an electron acceptor is a growth advantage for S.typhimurium over the competing microbiota in the lumen of the inflamed gut. This chain is Tetrathionate response regulatory protein TtrR (ttrR), found in Salmonella typhimurium (strain LT2 / SGSC1412 / ATCC 700720).